We begin with the raw amino-acid sequence, 597 residues long: Dictomallein-3 (597 aa).

A signal peptide spans 1-19 (MKLILILIFLFSCILFINC). The Peptidase M66 domain maps to 148–409 (PDVGQDYTLK…QNYFKNSIYY (262 aa)). Position 301 (histidine 301) interacts with Zn(2+). The active site involves glutamate 302. Residues histidine 305 and histidine 311 each contribute to the Zn(2+) site.

This sequence belongs to the dictomallein family. The cofactor is Zn(2+).

It localises to the secreted. The protein is Dictomallein-3 (dtmlC) of Dictyostelium discoideum (Social amoeba).